The sequence spans 171 residues: Antimicrobial protein CAP18 (171 aa).

The signal sequence occupies residues 1-29 (METHKHGPSLAWWSLLLLLLGLLMPPAIA). Intrachain disulfides connect cysteine 85/cysteine 96 and cysteine 107/cysteine 124.

It belongs to the cathelicidin family. As to expression, neutrophils.

It localises to the secreted. In terms of biological role, CAP18 binds to the lipid A moiety of bacterial lipopolysaccharides (LPS), a glycolipid present in the outer membrane of all Gram-negative bacteria. Has antibiotic activity. The polypeptide is Antimicrobial protein CAP18 (CAP18) (Oryctolagus cuniculus (Rabbit)).